The primary structure comprises 323 residues: Viral cathepsin (323 aa).

The N-terminal stretch at 1–16 (MNKILFYLFVYGVVNS) is a signal peptide. The propeptide at 17–112 (AAYDLLKAPN…IVLDQPPGKG (96 aa)) is activation peptide. Intrachain disulfides connect Cys133–Cys174, Cys167–Cys207, and Cys262–Cys310. The active site involves Cys136. N-linked (GlcNAc...) asparagine; by host glycosylation occurs at Asn158. Residues His269 and Asn289 contribute to the active site.

This sequence belongs to the peptidase C1 family. Interacts with chitinase/CHIA; this interaction maintains VCATH in the host endoplasmic reticulum. Post-translationally, synthesized as an inactive proenzyme and activated by proteolytic removal of the inhibitory propeptide.

It is found in the host endoplasmic reticulum. It catalyses the reaction Endopeptidase of broad specificity, hydrolyzing substrates of both cathepsin L and cathepsin B.. Cysteine protease that plays an essential role in host liquefaction to facilitate horizontal transmission of the virus. Accumulates within infected cells as an inactive proenzyme (proV-CATH), which is activated by proteolytic cleavage upon cell death. This Lepidoptera (butterflies and moths) protein is Viral cathepsin (VCATH).